We begin with the raw amino-acid sequence, 364 residues long: DNA polymerase IV (364 aa).

One can recognise a UmuC domain in the interval 14–198; it reads IIHIDMDAFF…LPIEKFHGVG (185 aa). The Mg(2+) site is built by aspartate 18 and aspartate 116. The active site involves glutamate 117.

Belongs to the DNA polymerase type-Y family. As to quaternary structure, monomer. Mg(2+) is required as a cofactor.

Its subcellular location is the cytoplasm. The enzyme catalyses DNA(n) + a 2'-deoxyribonucleoside 5'-triphosphate = DNA(n+1) + diphosphate. Poorly processive, error-prone DNA polymerase involved in untargeted mutagenesis. Copies undamaged DNA at stalled replication forks, which arise in vivo from mismatched or misaligned primer ends. These misaligned primers can be extended by PolIV. Exhibits no 3'-5' exonuclease (proofreading) activity. May be involved in translesional synthesis, in conjunction with the beta clamp from PolIII. This Streptococcus pyogenes serotype M4 (strain MGAS10750) protein is DNA polymerase IV.